A 425-amino-acid chain; its full sequence is Serine--tRNA ligase (425 aa).

An L-serine-binding site is contributed by 228–230 (TAE). 259-261 (RSE) serves as a coordination point for ATP. An L-serine-binding site is contributed by Glu-282. 346 to 349 (EIAS) is a binding site for ATP. Ser-382 contributes to the L-serine binding site.

The protein belongs to the class-II aminoacyl-tRNA synthetase family. Type-1 seryl-tRNA synthetase subfamily. Homodimer. The tRNA molecule binds across the dimer.

It localises to the cytoplasm. It catalyses the reaction tRNA(Ser) + L-serine + ATP = L-seryl-tRNA(Ser) + AMP + diphosphate + H(+). The catalysed reaction is tRNA(Sec) + L-serine + ATP = L-seryl-tRNA(Sec) + AMP + diphosphate + H(+). It functions in the pathway aminoacyl-tRNA biosynthesis; selenocysteinyl-tRNA(Sec) biosynthesis; L-seryl-tRNA(Sec) from L-serine and tRNA(Sec): step 1/1. Functionally, catalyzes the attachment of serine to tRNA(Ser). Is also able to aminoacylate tRNA(Sec) with serine, to form the misacylated tRNA L-seryl-tRNA(Sec), which will be further converted into selenocysteinyl-tRNA(Sec). This chain is Serine--tRNA ligase, found in Rickettsia peacockii (strain Rustic).